Here is a 148-residue protein sequence, read N- to C-terminus: Large ribosomal subunit protein uL15 (148 aa).

A compositionally biased stretch (basic residues) spans 1–28 (MIRRRKKVRKLRGSHTHGWGCKKKHRGG). The interval 1 to 43 (MIRRRKKVRKLRGSHTHGWGCKKKHRGGGSKGGRGMAGTGKRK) is disordered. Over residues 29–38 (GSKGGRGMAG) the composition is skewed to gly residues.

Belongs to the universal ribosomal protein uL15 family. Part of the 50S ribosomal subunit.

Its function is as follows. Binds to the 23S rRNA. This chain is Large ribosomal subunit protein uL15, found in Thermococcus kodakarensis (strain ATCC BAA-918 / JCM 12380 / KOD1) (Pyrococcus kodakaraensis (strain KOD1)).